A 290-amino-acid polypeptide reads, in one-letter code: 4-hydroxy-tetrahydrodipicolinate synthase (290 aa).

Residue T44 coordinates pyruvate. The active-site Proton donor/acceptor is the Y132. K160 acts as the Schiff-base intermediate with substrate in catalysis. I202 is a pyruvate binding site.

It belongs to the DapA family. Homotetramer; dimer of dimers.

It localises to the cytoplasm. The catalysed reaction is L-aspartate 4-semialdehyde + pyruvate = (2S,4S)-4-hydroxy-2,3,4,5-tetrahydrodipicolinate + H2O + H(+). Its pathway is amino-acid biosynthesis; L-lysine biosynthesis via DAP pathway; (S)-tetrahydrodipicolinate from L-aspartate: step 3/4. In terms of biological role, catalyzes the condensation of (S)-aspartate-beta-semialdehyde [(S)-ASA] and pyruvate to 4-hydroxy-tetrahydrodipicolinate (HTPA). The chain is 4-hydroxy-tetrahydrodipicolinate synthase from Trichlorobacter lovleyi (strain ATCC BAA-1151 / DSM 17278 / SZ) (Geobacter lovleyi).